A 20-amino-acid polypeptide reads, in one-letter code: Pregnancy-associated glycoprotein 67A (20 aa).

2 N-linked (GlcNAc...) asparagine glycosylation sites follow: N4 and N20.

It belongs to the peptidase A1 family. As to expression, chorionic epithelium (trophectoderm) and placental cotyledons.

The protein localises to the secreted. The protein resides in the extracellular space. This Bison bonasus (European bison) protein is Pregnancy-associated glycoprotein 67A.